Reading from the N-terminus, the 223-residue chain is Glutathione S-transferase A2 (223 aa).

The residue at position 2 (Ala2) is an N-acetylalanine. Positions 3–83 (GKPKLHYFNG…YIATKYNLYG (81 aa)) constitute a GST N-terminal domain. The residue at position 4 (Lys4) is an N6-succinyllysine. Residues Tyr9, Arg45, 54–55 (QV), and 67–68 (QT) contribute to the glutathione site. Residues 85-208 (DMKERALIDM…QPGSQRKPPM (124 aa)) form the GST C-terminal domain.

The protein belongs to the GST superfamily. Alpha family. As to quaternary structure, homodimer. Expressed in corpus luteum, adrenal gland, testis, liver, lung, thyroid and kidney.

The protein resides in the cytoplasm. The catalysed reaction is RX + glutathione = an S-substituted glutathione + a halide anion + H(+). Functionally, conjugation of reduced glutathione to a wide number of exogenous and endogenous hydrophobic electrophiles. This is Glutathione S-transferase A2 (GSTA2) from Bos taurus (Bovine).